A 786-amino-acid chain; its full sequence is Pheromone-regulated membrane protein 10 (786 aa).

Basic and acidic residues predominate over residues 1–28 (MADSGDKDVSKSVRFDKESIESKKRSSV). Disordered stretches follow at residues 1 to 65 (MADS…EDGN) and 77 to 103 (NGGA…DNDN). The span at 29 to 42 (DDSASSYSSSSSGQ) shows a compositional bias: low complexity. 10 consecutive transmembrane segments (helical) span residues 469-489 (WVCV…AFGG), 491-511 (WINL…QFIL), 521-541 (VFEI…GSIP), 545-565 (ICFG…YIIL), 584-604 (FYAI…AALF), 620-640 (PISP…ISLI), 645-665 (WTQL…TYWS), 675-695 (FTAA…SRIW), 697-717 (GLAV…GIAS), and 751-771 (FGIT…ASTL).

It belongs to the ThrE exporter (TC 2.A.79) family.

The protein localises to the membrane. The protein is Pheromone-regulated membrane protein 10 of Candida glabrata (strain ATCC 2001 / BCRC 20586 / JCM 3761 / NBRC 0622 / NRRL Y-65 / CBS 138) (Yeast).